A 242-amino-acid chain; its full sequence is MFKIFNDVPVPYGLYFQDSATPTFDGIIELHDIVMFYIVVTIVLVSYLLFVIIKNFSNDHISYKYLTHGTTLEIVWTIFPVVILLFIAFPSFILLYLCDEVIDPAMTIKAIASQWYWTYEYSDFIGETGEIVQFDSYIVPTDMLENGQLRMLDVDARIVVPTNTHLRFIVTSRDVIHDFALPSLGIKCDATPGRLNQVSALLQRESVYYGQCSELCGVLHSSMPIALEAVSIDKFLSWLDEQ.

Residues 7-33 lie on the Mitochondrial intermembrane side of the membrane; it reads DVPVPYGLYFQDSATPTFDGIIELHDI. A helical membrane pass occupies residues 34-55; the sequence is VMFYIVVTIVLVSYLLFVIIKN. Over 56–73 the chain is Mitochondrial matrix; sequence FSNDHISYKYLTHGTTLE. Residues 74–98 traverse the membrane as a helical segment; the sequence is IVWTIFPVVILLFIAFPSFILLYLC. At 99 to 242 the chain is on the mitochondrial intermembrane side; the sequence is DEVIDPAMTI…DKFLSWLDEQ (144 aa). The Cu cation site is built by His-177, Cys-212, Glu-214, Cys-216, His-220, and Met-223. Glu-214 provides a ligand contact to Mg(2+).

It belongs to the cytochrome c oxidase subunit 2 family. As to quaternary structure, component of the cytochrome c oxidase (complex IV, CIV), a multisubunit enzyme composed of a catalytic core of 3 subunits and several supernumerary subunits. The complex exists as a monomer or a dimer and forms supercomplexes (SCs) in the inner mitochondrial membrane with ubiquinol-cytochrome c oxidoreductase (cytochrome b-c1 complex, complex III, CIII). Cu cation is required as a cofactor. The signal sequence of COX2 is processed by IMP1.

Its subcellular location is the mitochondrion inner membrane. It catalyses the reaction 4 Fe(II)-[cytochrome c] + O2 + 8 H(+)(in) = 4 Fe(III)-[cytochrome c] + 2 H2O + 4 H(+)(out). Its function is as follows. Component of the cytochrome c oxidase, the last enzyme in the mitochondrial electron transport chain which drives oxidative phosphorylation. The respiratory chain contains 3 multisubunit complexes succinate dehydrogenase (complex II, CII), ubiquinol-cytochrome c oxidoreductase (cytochrome b-c1 complex, complex III, CIII) and cytochrome c oxidase (complex IV, CIV), that cooperate to transfer electrons derived from NADH and succinate to molecular oxygen, creating an electrochemical gradient over the inner membrane that drives transmembrane transport and the ATP synthase. Cytochrome c oxidase is the component of the respiratory chain that catalyzes the reduction of oxygen to water. Electrons originating from reduced cytochrome c in the intermembrane space (IMS) are transferred via the dinuclear copper A center (CU(A)) of subunit 2 and heme A of subunit 1 to the active site in subunit 1, a binuclear center (BNC) formed by heme A3 and copper B (CU(B)). The BNC reduces molecular oxygen to 2 water molecules using 4 electrons from cytochrome c in the IMS and 4 protons from the mitochondrial matrix. In Yarrowia lipolytica (strain CLIB 122 / E 150) (Yeast), this protein is Cytochrome c oxidase subunit 2 (COX2).